Reading from the N-terminus, the 436-residue chain is Trigger factor (436 aa).

The PPIase FKBP-type domain occupies 161 to 246 (DDQLNIDFVG…VNSVSEPKLP (86 aa)).

It belongs to the FKBP-type PPIase family. Tig subfamily.

The protein resides in the cytoplasm. It carries out the reaction [protein]-peptidylproline (omega=180) = [protein]-peptidylproline (omega=0). Its function is as follows. Involved in protein export. Acts as a chaperone by maintaining the newly synthesized protein in an open conformation. Functions as a peptidyl-prolyl cis-trans isomerase. The polypeptide is Trigger factor (Pseudomonas fluorescens (strain ATCC BAA-477 / NRRL B-23932 / Pf-5)).